The sequence spans 368 residues: Protein trichome birefringence-like 43 (368 aa).

The helical; Signal-anchor for type II membrane protein transmembrane segment at 9 to 25 threads the bilayer; that stretch reads GVVSVMVLMILVLLKQI. The GDS motif signature appears at 117 to 119; sequence GDS. Positions 344–358 match the DCXHWCLPGXXDXWN motif motif; sequence DCSHWCLSGVPDSWN.

It belongs to the PC-esterase family. TBL subfamily.

It is found in the membrane. In terms of biological role, may act as a bridging protein that binds pectin and other cell wall polysaccharides. Probably involved in maintaining esterification of pectins. May be involved in the specific O-acetylation of cell wall polymers. The polypeptide is Protein trichome birefringence-like 43 (TBL43) (Arabidopsis thaliana (Mouse-ear cress)).